The chain runs to 411 residues: Glutamate dehydrogenase 3, mitochondrial (411 aa).

A mitochondrion-targeting transit peptide spans 1 to 18 (MNALAATSRNFRQAARLL). The active site involves lysine 102.

This sequence belongs to the Glu/Leu/Phe/Val dehydrogenases family. Barely expressed in leaves, spikelets and roots. Glumes and stamens specific accumulation.

Its subcellular location is the mitochondrion. It carries out the reaction L-glutamate + NAD(+) + H2O = 2-oxoglutarate + NH4(+) + NADH + H(+). It catalyses the reaction L-glutamate + NADP(+) + H2O = 2-oxoglutarate + NH4(+) + NADPH + H(+). This is Glutamate dehydrogenase 3, mitochondrial (GDH3) from Oryza sativa subsp. japonica (Rice).